Reading from the N-terminus, the 84-residue chain is Cell division topological specificity factor (84 aa).

This sequence belongs to the MinE family.

Functionally, prevents the cell division inhibition by proteins MinC and MinD at internal division sites while permitting inhibition at polar sites. This ensures cell division at the proper site by restricting the formation of a division septum at the midpoint of the long axis of the cell. The chain is Cell division topological specificity factor from Burkholderia multivorans (strain ATCC 17616 / 249).